The chain runs to 263 residues: uncharacterized protein (263 aa).

Helical transmembrane passes span methionine 1–glutamine 21, leucine 38–tyrosine 58, isoleucine 82–valine 102, glycine 118–tyrosine 138, glycine 151–leucine 171, phenylalanine 196–threonine 216, and phenylalanine 230–valine 250.

The protein resides in the membrane. This is an uncharacterized protein from Saccharomyces cerevisiae (strain ATCC 204508 / S288c) (Baker's yeast).